Here is a 214-residue protein sequence, read N- to C-terminus: Pyridoxine/pyridoxamine 5'-phosphate oxidase (214 aa).

Substrate-binding positions include 9–12 and Lys-67; that span reads RKDY. FMN is bound by residues 62-67, 77-78, Arg-83, Lys-84, and Gln-106; these read RMVLLK and FT. Residues Tyr-124, Arg-128, and Ser-132 each coordinate substrate. Residues 141-142 and Trp-186 contribute to the FMN site; that span reads QS. Residue 192–194 coordinates substrate; it reads RLH. Arg-196 is an FMN binding site.

The protein belongs to the pyridoxamine 5'-phosphate oxidase family. In terms of assembly, homodimer. The cofactor is FMN.

It carries out the reaction pyridoxamine 5'-phosphate + O2 + H2O = pyridoxal 5'-phosphate + H2O2 + NH4(+). It catalyses the reaction pyridoxine 5'-phosphate + O2 = pyridoxal 5'-phosphate + H2O2. The protein operates within cofactor metabolism; pyridoxal 5'-phosphate salvage; pyridoxal 5'-phosphate from pyridoxamine 5'-phosphate: step 1/1. Its pathway is cofactor metabolism; pyridoxal 5'-phosphate salvage; pyridoxal 5'-phosphate from pyridoxine 5'-phosphate: step 1/1. Its function is as follows. Catalyzes the oxidation of either pyridoxine 5'-phosphate (PNP) or pyridoxamine 5'-phosphate (PMP) into pyridoxal 5'-phosphate (PLP). This is Pyridoxine/pyridoxamine 5'-phosphate oxidase from Nostoc punctiforme (strain ATCC 29133 / PCC 73102).